Consider the following 98-residue polypeptide: uncharacterized protein (98 aa).

2 consecutive transmembrane segments (helical) span residues 13–33 (LFSL…IAIF) and 65–85 (IMVI…IFIS).

It localises to the membrane. This is an uncharacterized protein from Saccharomyces cerevisiae (strain ATCC 204508 / S288c) (Baker's yeast).